Consider the following 189-residue polypeptide: Segregation and condensation protein B (189 aa).

Belongs to the ScpB family. In terms of assembly, homodimer. Homodimerization may be required to stabilize the binding of ScpA to the Smc head domains. Component of a cohesin-like complex composed of ScpA, ScpB and the Smc homodimer, in which ScpA and ScpB bind to the head domain of Smc. The presence of the three proteins is required for the association of the complex with DNA.

It is found in the cytoplasm. Functionally, participates in chromosomal partition during cell division. May act via the formation of a condensin-like complex containing Smc and ScpA that pull DNA away from mid-cell into both cell halves. This is Segregation and condensation protein B from Clostridium tetani (strain Massachusetts / E88).